The following is a 62-amino-acid chain: Inner membrane protein p12 (62 aa).

Residues 16–36 (LLIVAIIVVIMAIMLYYFWWM) traverse the membrane as a helical segment.

Belongs to the asfivirus inner membrane protein p12 family. Homomultimer; disulfide-linked. Post-translationally, not glycosylated.

It is found in the virion membrane. This chain is Inner membrane protein p12, found in African swine fever virus (isolate Tick/Malawi/Lil 20-1/1983) (ASFV).